Consider the following 262-residue polypeptide: Acyl-[acyl-carrier-protein]--UDP-N-acetylglucosamine O-acyltransferase (262 aa).

This sequence belongs to the transferase hexapeptide repeat family. LpxA subfamily. In terms of assembly, homotrimer.

Its subcellular location is the cytoplasm. The enzyme catalyses a (3R)-hydroxyacyl-[ACP] + UDP-N-acetyl-alpha-D-glucosamine = a UDP-3-O-[(3R)-3-hydroxyacyl]-N-acetyl-alpha-D-glucosamine + holo-[ACP]. Its pathway is glycolipid biosynthesis; lipid IV(A) biosynthesis; lipid IV(A) from (3R)-3-hydroxytetradecanoyl-[acyl-carrier-protein] and UDP-N-acetyl-alpha-D-glucosamine: step 1/6. Involved in the biosynthesis of lipid A, a phosphorylated glycolipid that anchors the lipopolysaccharide to the outer membrane of the cell. This is Acyl-[acyl-carrier-protein]--UDP-N-acetylglucosamine O-acyltransferase from Cronobacter sakazakii (strain ATCC BAA-894) (Enterobacter sakazakii).